We begin with the raw amino-acid sequence, 930 residues long: Vacuolar membrane protease (930 aa).

The disordered stretch occupies residues 1–28 (MPQEEVHDTSSVSDDNLTNTGGGGSNYY). Residues 1–49 (MPQEEVHDTSSVSDDNLTNTGGGGSNYYNSHNQPNVFVRAIRSIFGYRK) lie on the Cytoplasmic side of the membrane. Residues 50-70 (TSLTLFVILTIIFTIALSLYD) traverse the membrane as a helical segment. Residues 71 to 379 (NNLDLTIELP…YFFSSPISAL (309 aa)) are Vacuolar-facing. N-linked (GlcNAc...) asparagine glycosylation is present at Asn-163. Zn(2+)-binding residues include His-177 and Asp-189. Residue Glu-222 is the Proton acceptor of the active site. The Zn(2+) site is built by Glu-223, Glu-248, and His-320. Residue Asn-354 is glycosylated (N-linked (GlcNAc...) asparagine). A helical membrane pass occupies residues 380 to 400 (VTINSVLIVLFPILSGPLLFI). Residues 401–411 (TVRYKKWKIGT) are Cytoplasmic-facing. Residues 412–432 (SNFLSLPLAIVLTVAIVMIVV) traverse the membrane as a helical segment. Residues 433-449 (NQGFQIANPFLPSSHPL) lie on the Vacuolar side of the membrane. A helical transmembrane segment spans residues 450–470 (LLVATTTSISLLIYYVFLNGV). Over 471 to 480 (NWVSPSGDQK) the chain is Cytoplasmic. A helical membrane pass occupies residues 481-501 (LITIIEISFIYWLILIYVTHG). The Vacuolar portion of the chain corresponds to 502-514 (LSQNKIGDDHTGE). A helical membrane pass occupies residues 515–535 (FPFTVLFFLEATASLFGLIGW). Topologically, residues 536–598 (TFSRSIKQSS…FGYDWSLQYL (63 aa)) are cytoplasmic. The tract at residues 542-570 (KQSSNDGSDEPLLTGTAERYGSDDTDEDE) is disordered. A helical transmembrane segment spans residues 599-619 (LIVPISSLIIFNSGWLVLDGI). N-linked (GlcNAc...) asparagine glycosylation occurs at Asn-620. Residues 620 to 631 (NKSIQESFAAEN) lie on the Vacuolar side of the membrane. Residues 632–652 (LIYLLIQLFSQFWILPILPFV) traverse the membrane as a helical segment. Residues 653–657 (YKLNR) are Cytoplasmic-facing. Residues 658 to 678 (FIVFGLTIFAISGVALISFLD) form a helical membrane-spanning segment. Over 679–930 (PFNQENPLKL…LVSVSLKIEV (252 aa)) the chain is Vacuolar. 4 N-linked (GlcNAc...) asparagine glycosylation sites follow: Asn-697, Asn-768, Asn-808, and Asn-890.

The protein belongs to the peptidase M28 family. Zn(2+) is required as a cofactor.

The protein resides in the vacuole membrane. Its function is as follows. May be involved in vacuolar sorting and osmoregulation. This chain is Vacuolar membrane protease, found in Candida dubliniensis (strain CD36 / ATCC MYA-646 / CBS 7987 / NCPF 3949 / NRRL Y-17841) (Yeast).